Consider the following 1742-residue polypeptide: Meiosis regulator and mRNA stability factor 1 (1742 aa).

Position 65 is a phosphoserine (Ser-65). Positions 351–488 (IGVFWDIENC…ALLHHANELI (138 aa)) constitute an NYN domain. 2 disordered regions span residues 620–642 (PSSAKAAPGKGSQANSGSATRNA) and 655–721 (SKTG…KEKE). Residues 631-642 (SQANSGSATRNA) show a composition bias toward polar residues. Residues 673–689 (APPHRSSSAAAPAPKAP) show a composition bias toward low complexity. At Tyr-696 the chain carries Phosphotyrosine. Position 757 is a phosphoserine (Ser-757). One can recognise an RRM domain in the interval 788–867 (VDVQISNLDY…KKILVSLATG (80 aa)). 2 HTH OST-type domains span residues 872–946 (SLSL…SPLG) and 1000–1077 (SLKT…HNKP). Phosphoserine is present on residues Ser-1089 and Ser-1091. HTH OST-type domains lie at 1097-1171 (QLIQ…LTHR), 1173-1247 (QVKR…CIPR), 1257-1332 (RTKQ…TEVE), 1333-1408 (RFKA…INRK), 1409-1484 (SLRA…CVKL), and 1486-1560 (SLYL…LKND). Phosphoserine is present on Ser-1571. Positions 1678 to 1729 (IRNENLPPDPSSPGVSAAVPAPPSPSSETPESLLSKDPTESPAKKQPKNRVK) are disordered. The span at 1703 to 1712 (SSETPESLLS) shows a compositional bias: low complexity.

Interacts with LIMK2.

The protein localises to the peroxisome. Its function is as follows. Essential regulator of oogenesis required for female meiotic progression to repress transposable elements and preventing their mobilization, which is essential for the germline integrity. Probably acts via some RNA metabolic process, equivalent to the piRNA system in males, which mediates the repression of transposable elements during meiosis by forming complexes composed of RNAs and governs the methylation and subsequent repression of transposons. Also required to protect from DNA double-strand breaks. The protein is Meiosis regulator and mRNA stability factor 1 of Bos taurus (Bovine).